The sequence spans 163 residues: Lysosomal enzyme trafficking factor (163 aa).

2 helical membrane-spanning segments follow: residues 40-60 (MGWIGVGLYLLASAAAFYYVF) and 98-118 (LPFWLWTIIFLIPYLQMFLFL).

The protein belongs to the LYSET family. As to quaternary structure, interacts with GNPTAB; this interaction is important for proper localization of GNPTAB in Golgi stacks. Interacts with MBTPS1.

It localises to the golgi apparatus membrane. Functionally, required for mannose-6-phosphate-dependent trafficking of lysosomal enzymes. LYSET bridges GlcNAc-1-phosphate transferase (GNPTAB), to the membrane-bound transcription factor site-1 protease (MBTPS1), thus allowing proteolytic activation of the GNPTAB. GNPTAB is involved in the regulation of M6P-dependent Golgi-to-lysosome trafficking of lysosomal enzymes. LYSET is thus an essential factor for maturation and delivery of lysosomal hydrolases. Plays an essential function for cells that depend on lysosomal catabolism to generate nutrients. In Mus musculus (Mouse), this protein is Lysosomal enzyme trafficking factor (Lyset).